The primary structure comprises 550 residues: Dihydroxy-acid dehydratase (550 aa).

D81 lines the Mg(2+) pocket. Position 122 (C122) interacts with [2Fe-2S] cluster. Residues D123 and K124 each contribute to the Mg(2+) site. Position 124 is an N6-carboxylysine (K124). [2Fe-2S] cluster is bound at residue C194. E442 contacts Mg(2+). S467 acts as the Proton acceptor in catalysis.

Belongs to the IlvD/Edd family. Homodimer. [2Fe-2S] cluster is required as a cofactor. Mg(2+) serves as cofactor.

It carries out the reaction (2R)-2,3-dihydroxy-3-methylbutanoate = 3-methyl-2-oxobutanoate + H2O. The enzyme catalyses (2R,3R)-2,3-dihydroxy-3-methylpentanoate = (S)-3-methyl-2-oxopentanoate + H2O. The protein operates within amino-acid biosynthesis; L-isoleucine biosynthesis; L-isoleucine from 2-oxobutanoate: step 3/4. It participates in amino-acid biosynthesis; L-valine biosynthesis; L-valine from pyruvate: step 3/4. Functionally, functions in the biosynthesis of branched-chain amino acids. Catalyzes the dehydration of (2R,3R)-2,3-dihydroxy-3-methylpentanoate (2,3-dihydroxy-3-methylvalerate) into 2-oxo-3-methylpentanoate (2-oxo-3-methylvalerate) and of (2R)-2,3-dihydroxy-3-methylbutanoate (2,3-dihydroxyisovalerate) into 2-oxo-3-methylbutanoate (2-oxoisovalerate), the penultimate precursor to L-isoleucine and L-valine, respectively. This chain is Dihydroxy-acid dehydratase, found in Methanoregula boonei (strain DSM 21154 / JCM 14090 / 6A8).